A 445-amino-acid chain; its full sequence is Chromosomal replication initiator protein DnaA (445 aa).

Residues 1 to 71 form a domain I, interacts with DnaA modulators region; sequence MEEVWLQAQS…SVQSLTDSQT (71 aa). A domain II region spans residues 71 to 108; the sequence is TKIELLIAKPKTEKPKQPAASEVTAAEPEACSGPDHST. The interval 83 to 106 is disordered; it reads EKPKQPAASEVTAAEPEACSGPDH. The interval 109–325 is domain III, AAA+ region; that stretch reads NLNPKYTFDT…GMLIRLGAVS (217 aa). 4 residues coordinate ATP: Gly-153, Gly-155, Lys-156, and Thr-157. The interval 326–445 is domain IV, binds dsDNA; sequence SLTGKNITLD…VDTLRKGLLS (120 aa).

The protein belongs to the DnaA family. In terms of assembly, oligomerizes as a right-handed, spiral filament on DNA at oriC.

The protein localises to the cytoplasm. Plays an essential role in the initiation and regulation of chromosomal replication. ATP-DnaA binds to the origin of replication (oriC) to initiate formation of the DNA replication initiation complex once per cell cycle. Binds the DnaA box (a 9 base pair repeat at the origin) and separates the double-stranded (ds)DNA. Forms a right-handed helical filament on oriC DNA; dsDNA binds to the exterior of the filament while single-stranded (ss)DNA is stabiized in the filament's interior. The ATP-DnaA-oriC complex binds and stabilizes one strand of the AT-rich DNA unwinding element (DUE), permitting loading of DNA polymerase. After initiation quickly degrades to an ADP-DnaA complex that is not apt for DNA replication. Binds acidic phospholipids. The sequence is that of Chromosomal replication initiator protein DnaA from Geobacter sulfurreducens (strain ATCC 51573 / DSM 12127 / PCA).